The primary structure comprises 166 residues: Large ribosomal subunit protein uL10 (166 aa).

The protein belongs to the universal ribosomal protein uL10 family. As to quaternary structure, part of the ribosomal stalk of the 50S ribosomal subunit. The N-terminus interacts with L11 and the large rRNA to form the base of the stalk. The C-terminus forms an elongated spine to which L12 dimers bind in a sequential fashion forming a multimeric L10(L12)X complex.

Forms part of the ribosomal stalk, playing a central role in the interaction of the ribosome with GTP-bound translation factors. In Stutzerimonas stutzeri (strain A1501) (Pseudomonas stutzeri), this protein is Large ribosomal subunit protein uL10.